The sequence spans 316 residues: Secondary metabolism regulator laeA (316 aa).

This sequence belongs to the methyltransferase superfamily. LaeA methyltransferase family. In terms of assembly, component of the heterotrimeric velvet complex composed of laeA, ve1 and velB; Ve1 acting as a bridging protein between laeA and velB. Interacts directly with veA.

Its subcellular location is the nucleus. It localises to the cytoplasm. The catalysed reaction is L-methionyl-[protein] + S-adenosyl-L-methionine = S-methyl-L-methionyl-[protein] + S-adenosyl-L-homocysteine. Functionally, methyltransferase that performs automethylation. No other methyl-accepting substrate has been identified yet. Component of the velvet transcription factor complex that acts as a global regulator for secondary metabolite gene expression. Controls the expression of the mycotoxins trichothecenes and zearalenon gene clusters. Negatively controls perithecial induction, but positively controls virulence toward the host plant. The chain is Secondary metabolism regulator laeA from Gibberella zeae (strain ATCC MYA-4620 / CBS 123657 / FGSC 9075 / NRRL 31084 / PH-1) (Wheat head blight fungus).